A 68-amino-acid polypeptide reads, in one-letter code: MKPGIHPEYKASTITCACGAVVETRSTRGSFTTDVCSACHPFYTGKHKIMDVAGRVDRFRKKYATAGK.

Zn(2+) is bound by residues Cys16, Cys18, Cys36, and Cys39.

The protein belongs to the bacterial ribosomal protein bL31 family. Type A subfamily. Part of the 50S ribosomal subunit. The cofactor is Zn(2+).

Its function is as follows. Binds the 23S rRNA. This Sorangium cellulosum (strain So ce56) (Polyangium cellulosum (strain So ce56)) protein is Large ribosomal subunit protein bL31.